We begin with the raw amino-acid sequence, 354 residues long: Histidinol-phosphate aminotransferase (354 aa).

At Lys-210 the chain carries N6-(pyridoxal phosphate)lysine.

This sequence belongs to the class-II pyridoxal-phosphate-dependent aminotransferase family. Histidinol-phosphate aminotransferase subfamily. In terms of assembly, homodimer. The cofactor is pyridoxal 5'-phosphate.

It carries out the reaction L-histidinol phosphate + 2-oxoglutarate = 3-(imidazol-4-yl)-2-oxopropyl phosphate + L-glutamate. The protein operates within amino-acid biosynthesis; L-histidine biosynthesis; L-histidine from 5-phospho-alpha-D-ribose 1-diphosphate: step 7/9. The protein is Histidinol-phosphate aminotransferase of Clostridium botulinum (strain Kyoto / Type A2).